The following is a 214-amino-acid chain: Protein FAM167A (214 aa).

Disordered stretches follow at residues 1–26 (MSVP…PDDH) and 59–108 (PFPR…LSTG). A coiled-coil region spans residues 118-156 (EAIAWLRKELTEMRLQDQQLARQLMRLRGDINKLKIEHT).

It belongs to the FAM167 (SEC) family. As to expression, expressed in skin, including primary keratinocytes, spleen, kidney, leukocytes, testis, lung, small intestine and prostate.

In Homo sapiens (Human), this protein is Protein FAM167A (FAM167A).